The primary structure comprises 176 residues: Small ribosomal subunit protein uS5 (176 aa).

In terms of domain architecture, S5 DRBM spans 18 to 81 (FEEKMLFVNR…SIARKNMISV (64 aa)).

It belongs to the universal ribosomal protein uS5 family. Part of the 30S ribosomal subunit. Contacts proteins S4 and S8.

Functionally, with S4 and S12 plays an important role in translational accuracy. Its function is as follows. Located at the back of the 30S subunit body where it stabilizes the conformation of the head with respect to the body. This Deinococcus deserti (strain DSM 17065 / CIP 109153 / LMG 22923 / VCD115) protein is Small ribosomal subunit protein uS5.